A 173-amino-acid polypeptide reads, in one-letter code: Ribulose bisphosphate carboxylase small subunit, chloroplastic 7 (173 aa).

Residues 1 to 49 constitute a chloroplast transit peptide; that stretch reads MASIPATVATVAQANMVAPFTGLKSNAAFPVTKKVNDFSTLASNGGRVQ.

It belongs to the RuBisCO small chain family. As to quaternary structure, heterohexadecamer of 8 large and 8 small subunits.

It localises to the plastid. The protein resides in the chloroplast. Functionally, ruBisCO catalyzes two reactions: the carboxylation of D-ribulose 1,5-bisphosphate, the primary event in carbon dioxide fixation, as well as the oxidative fragmentation of the pentose substrate. Both reactions occur simultaneously and in competition at the same active site. Although the small subunit is not catalytic it is essential for maximal activity. The chain is Ribulose bisphosphate carboxylase small subunit, chloroplastic 7 from Flaveria pringlei.